We begin with the raw amino-acid sequence, 484 residues long: UDP-N-acetylmuramate--L-alanine ligase (484 aa).

124 to 130 (GTHGKTT) serves as a coordination point for ATP.

It belongs to the MurCDEF family.

Its subcellular location is the cytoplasm. It carries out the reaction UDP-N-acetyl-alpha-D-muramate + L-alanine + ATP = UDP-N-acetyl-alpha-D-muramoyl-L-alanine + ADP + phosphate + H(+). It participates in cell wall biogenesis; peptidoglycan biosynthesis. In terms of biological role, cell wall formation. In Pseudoalteromonas atlantica (strain T6c / ATCC BAA-1087), this protein is UDP-N-acetylmuramate--L-alanine ligase.